A 175-amino-acid chain; its full sequence is MPVELVDEAGRAVGACPVAEAHRDPGKLHRAFSVLLFDTAGRVLLQQRAAVKTRFPLLWANTCCGHPAPGESVEAAAATRLAEELGVAAGLTEVGVFRYRAADTATGRVEHEWDHVLIGTLDTTPHPDPAEVANLRWVRPAEVRAKLAAEPAAYTPWLAEVLEIADAAYRESAGR.

Residues histidine 22 and histidine 29 each contribute to the Mn(2+) site. The region spanning 27 to 160 (KLHRAFSVLL…PAAYTPWLAE (134 aa)) is the Nudix hydrolase domain. Cysteine 64 is a catalytic residue. Residue cysteine 64 participates in Mg(2+) binding. A Mn(2+)-binding site is contributed by histidine 66. Glutamate 84 is a Mg(2+) binding site. The Mn(2+) site is built by glutamate 110 and glutamate 112. Glutamate 112 is a catalytic residue.

The protein belongs to the IPP isomerase type 1 family. The cofactor is Mg(2+). Mn(2+) is required as a cofactor.

It localises to the cytoplasm. The catalysed reaction is isopentenyl diphosphate = dimethylallyl diphosphate. The protein operates within isoprenoid biosynthesis; dimethylallyl diphosphate biosynthesis; dimethylallyl diphosphate from isopentenyl diphosphate: step 1/1. Its function is as follows. Catalyzes the 1,3-allylic rearrangement of the homoallylic substrate isopentenyl (IPP) to its highly electrophilic allylic isomer, dimethylallyl diphosphate (DMAPP). The protein is Isopentenyl-diphosphate Delta-isomerase of Nocardia farcinica (strain IFM 10152).